A 239-amino-acid chain; its full sequence is Ribonuclease PH (239 aa).

Phosphate contacts are provided by residues Arg86 and 124 to 126 (GTR).

Belongs to the RNase PH family. In terms of assembly, homohexameric ring arranged as a trimer of dimers.

The catalysed reaction is tRNA(n+1) + phosphate = tRNA(n) + a ribonucleoside 5'-diphosphate. In terms of biological role, phosphorolytic 3'-5' exoribonuclease that plays an important role in tRNA 3'-end maturation. Removes nucleotide residues following the 3'-CCA terminus of tRNAs; can also add nucleotides to the ends of RNA molecules by using nucleoside diphosphates as substrates, but this may not be physiologically important. Probably plays a role in initiation of 16S rRNA degradation (leading to ribosome degradation) during starvation. The sequence is that of Ribonuclease PH from Rickettsia africae (strain ESF-5).